The chain runs to 175 residues: Bifunctional protein PyrR (175 aa).

Substrate contacts are provided by residues 40 to 41, 102 to 110, Arg135, and Val159; these read TR and DDVLYTGRT. The PRPP-binding motif lies at 98–110; sequence VIIIDDVLYTGRT.

This sequence belongs to the purine/pyrimidine phosphoribosyltransferase family. PyrR subfamily. Homodimer and homohexamer; in equilibrium.

The enzyme catalyses UMP + diphosphate = 5-phospho-alpha-D-ribose 1-diphosphate + uracil. In terms of biological role, regulates transcriptional attenuation of the pyrimidine nucleotide (pyr) operon by binding in a uridine-dependent manner to specific sites on pyr mRNA. This disrupts an antiterminator hairpin in the RNA and favors formation of a downstream transcription terminator, leading to a reduced expression of downstream genes. Functionally, also displays a weak uracil phosphoribosyltransferase activity which is not physiologically significant. The sequence is that of Bifunctional protein PyrR from Staphylococcus haemolyticus (strain JCSC1435).